The chain runs to 351 residues: Transcription elongation factor A N-terminal and central domain-containing protein (351 aa).

The 78-residue stretch at Asn5–Thr82 folds into the TFIIS N-terminal domain. 2 disordered regions span residues Ala86–Ser119 and Leu144–Pro169. Residues Ser103–Ser119 are compositionally biased toward polar residues. Positions Lys145–Glu165 are enriched in basic and acidic residues. Residues Met173–Gly289 form the TFIIS central domain.

In Homo sapiens (Human), this protein is Transcription elongation factor A N-terminal and central domain-containing protein (TCEANC).